Reading from the N-terminus, the 946-residue chain is Calcium-transporting ATPase type 2C member 2 (946 aa).

Residues 1–106 (MVEGRVSEFL…DNSEPVWKKY (106 aa)) are Cytoplasmic-facing. The interval 71–95 (VDLHTGLSEFSVTQRRLAHGWNEFV) is interaction with ORAI1. Residues 107 to 127 (LDQFKNPLILLLLGSALVSVL) traverse the membrane as a helical segment. The Extracellular segment spans residues 128 to 129 (TK). The helical transmembrane segment at 130-150 (EYEDAVSIATAVLVVVTVAFI) threads the bilayer. The Cytoplasmic portion of the chain corresponds to 151-231 (QEYRSEKSLE…EAEPCSKTDS (81 aa)). A helical membrane pass occupies residues 232-252 (PLTGGGDLTTLSNIVFMGTLV). The Extracellular segment spans residues 253–293 (QYGRGQGVVIGTGESSQFGEVFKMMQAEETPKTPLQKSMDR). Phosphothreonine is present on Thr264. Residues Ser267 and Ser268 each carry the phosphoserine modification. A helical transmembrane segment spans residues 294–314 (LGKQLTLFSFGIIGLIMLIGW). Over 315–331 (SQGKQLLSMFTIGVSLA) the chain is Cytoplasmic. Positions 332, 333, 335, and 337 each coordinate Ca(2+). A helical membrane pass occupies residues 332 to 352 (VAAIPEGLPIVVMVTLVLGVL). At 353 to 750 (RMAKKRVIVK…ISALSLITLS (398 aa)) the chain is on the extracellular side. Asp379 acts as the 4-aspartylphosphate intermediate in catalysis. 2 residues coordinate Mg(2+): Asp674 and Asp678. A helical membrane pass occupies residues 751-771 (TVFNLPSPLNAMQILWINIIM). Residues Asn768 and Asp772 each contribute to the Ca(2+) site. Topologically, residues 772–804 (DGPPAQSLGVEPVDKDAFRQPPRSVRDTILSRA) are cytoplasmic. The chain crosses the membrane as a helical span at residues 805–825 (LILKILMSAAIIISGTLFIFW). Residues 826-837 (KEMPEDRASTPR) are Extracellular-facing. The helical transmembrane segment at 838–855 (TTTMTFTCFVFFDLFNAL) threads the bilayer. The Cytoplasmic portion of the chain corresponds to 856–874 (TCRSQTKLIFEIGFLRNHM). A helical membrane pass occupies residues 875–895 (FLYSVLGSILGQLAVIYIPPL). Topologically, residues 896–905 (QRVFQTENLG) are extracellular. Residues 906–926 (ALDLLFLTGLASSVFILSELL) form a helical membrane-spanning segment. The Cytoplasmic portion of the chain corresponds to 927–946 (KLCEKYCCSPKRVQMHPEDV).

Belongs to the cation transport ATPase (P-type) (TC 3.A.3) family. Type IIA subfamily. Interacts (via N-terminus) with ORAI1 (via N- and C-termini); this interaction regulates Ca(2+) influx at the plasma membrane. In terms of tissue distribution, highly expressed in the gastrointestinal and respiratory tracts, prostate, thyroid, salivary, and mammary glands. Expressed in colon epithelial cells (at protein level). Expressed in brain and testis (at protein level).

It is found in the golgi apparatus. The protein localises to the trans-Golgi network membrane. It localises to the cell membrane. Its subcellular location is the basolateral cell membrane. The catalysed reaction is Ca(2+)(in) + ATP + H2O = Ca(2+)(out) + ADP + phosphate + H(+). The enzyme catalyses Mn(2+)(in) + ATP + H2O = Mn(2+)(out) + ADP + phosphate + H(+). ATP-driven pump that supplies the Golgi apparatus with Ca(2+) and Mn(2+) ions, both essential cofactors for processing and trafficking of newly synthesized proteins in the secretory pathway. Within a catalytic cycle, acquires Ca(2+) or Mn(2+) ions on the cytoplasmic side of the membrane and delivers them to the lumenal side. The transfer of ions across the membrane is coupled to ATP hydrolysis and is associated with a transient phosphorylation that shifts the pump conformation from inward-facing to outward-facing state. Induces Ca(2+) influx independently of its ATP-driven pump function. At the basolateral membrane of mammary epithelial cells, interacts with Ca(2+) channel ORAI1 and mediates Ca(2+) entry independently of the Ca(2+) content of endoplasmic reticulum or Golgi stores. May facilitate transepithelial transport of large quantities of Ca(2+) for milk secretion via activation of Ca(2+) influx channels at the plasma membrane and active Ca(2+) transport at the Golgi apparatus. The protein is Calcium-transporting ATPase type 2C member 2 of Homo sapiens (Human).